The sequence spans 477 residues: Aspartyl/glutamyl-tRNA(Asn/Gln) amidotransferase subunit B (477 aa).

This sequence belongs to the GatB/GatE family. GatB subfamily. As to quaternary structure, heterotrimer of A, B and C subunits.

It catalyses the reaction L-glutamyl-tRNA(Gln) + L-glutamine + ATP + H2O = L-glutaminyl-tRNA(Gln) + L-glutamate + ADP + phosphate + H(+). It carries out the reaction L-aspartyl-tRNA(Asn) + L-glutamine + ATP + H2O = L-asparaginyl-tRNA(Asn) + L-glutamate + ADP + phosphate + 2 H(+). Allows the formation of correctly charged Asn-tRNA(Asn) or Gln-tRNA(Gln) through the transamidation of misacylated Asp-tRNA(Asn) or Glu-tRNA(Gln) in organisms which lack either or both of asparaginyl-tRNA or glutaminyl-tRNA synthetases. The reaction takes place in the presence of glutamine and ATP through an activated phospho-Asp-tRNA(Asn) or phospho-Glu-tRNA(Gln). The protein is Aspartyl/glutamyl-tRNA(Asn/Gln) amidotransferase subunit B of Coxiella burnetii (strain CbuG_Q212) (Coxiella burnetii (strain Q212)).